Reading from the N-terminus, the 591-residue chain is Aspartate--tRNA(Asp/Asn) ligase (591 aa).

Residue Glu176 coordinates L-aspartate. Residues 200 to 203 (QLFK) form an aspartate region. Arg222 lines the L-aspartate pocket. Residues 222 to 224 (RDE) and Gln231 contribute to the ATP site. His450 contacts L-aspartate. Glu484 is a binding site for ATP. Arg491 serves as a coordination point for L-aspartate. 536–539 (GLDR) is a binding site for ATP.

The protein belongs to the class-II aminoacyl-tRNA synthetase family. Type 1 subfamily. Homodimer.

It is found in the cytoplasm. The enzyme catalyses tRNA(Asx) + L-aspartate + ATP = L-aspartyl-tRNA(Asx) + AMP + diphosphate. In terms of biological role, aspartyl-tRNA synthetase with relaxed tRNA specificity since it is able to aspartylate not only its cognate tRNA(Asp) but also tRNA(Asn). Reaction proceeds in two steps: L-aspartate is first activated by ATP to form Asp-AMP and then transferred to the acceptor end of tRNA(Asp/Asn). The sequence is that of Aspartate--tRNA(Asp/Asn) ligase from Bacillus cereus (strain B4264).